We begin with the raw amino-acid sequence, 443 residues long: ATP-dependent protease ATPase subunit HslU (443 aa).

Residues Ile-18, 60 to 65 (GVGKTE), Asp-256, Glu-321, and Arg-393 each bind ATP.

The protein belongs to the ClpX chaperone family. HslU subfamily. A double ring-shaped homohexamer of HslV is capped on each side by a ring-shaped HslU homohexamer. The assembly of the HslU/HslV complex is dependent on binding of ATP.

Its subcellular location is the cytoplasm. Functionally, ATPase subunit of a proteasome-like degradation complex; this subunit has chaperone activity. The binding of ATP and its subsequent hydrolysis by HslU are essential for unfolding of protein substrates subsequently hydrolyzed by HslV. HslU recognizes the N-terminal part of its protein substrates and unfolds these before they are guided to HslV for hydrolysis. This Pectobacterium atrosepticum (strain SCRI 1043 / ATCC BAA-672) (Erwinia carotovora subsp. atroseptica) protein is ATP-dependent protease ATPase subunit HslU.